A 453-amino-acid chain; its full sequence is Phosphomannomutase (453 aa).

The active-site Phosphoserine intermediate is Ser-96. Positions 96, 243, 245, and 247 each coordinate Mg(2+).

Belongs to the phosphohexose mutase family. It depends on Mg(2+) as a cofactor.

The catalysed reaction is alpha-D-mannose 1-phosphate = D-mannose 6-phosphate. Its pathway is nucleotide-sugar biosynthesis; GDP-alpha-D-mannose biosynthesis; alpha-D-mannose 1-phosphate from D-fructose 6-phosphate: step 2/2. The protein operates within bacterial outer membrane biogenesis; LPS O-antigen biosynthesis. Its function is as follows. Involved in GDP-mannose biosynthesis which serves as the activated sugar nucleotide precursor for mannose residues in cell surface polysaccharides. This enzyme participates in synthesis of the LPS O7 antigen. This is Phosphomannomutase (manB) from Escherichia coli.